We begin with the raw amino-acid sequence, 1376 residues long: Spike glycoprotein (1376 aa).

The signal sequence occupies residues 1–13 (MLFVFILFLPSCL). Over 14 to 1317 (GYIGDFRCIQ…GTYEMYVKWP (1304 aa)) the chain is Extracellular. The BetaCoV S1-NTD domain occupies 15–296 (YIGDFRCIQT…SYISEIKCKT (282 aa)). The receptor binding site stretch occupies residues 15–330 (YIGDFRCIQT…RRVPNLPDCK (316 aa)). Intrachain disulfides connect cysteine 21–cysteine 158, cysteine 153–cysteine 187, cysteine 165–cysteine 246, cysteine 284–cysteine 294, and cysteine 329–cysteine 354. 3 N-linked (GlcNAc...) asparagine; by host glycosylation sites follow: asparagine 31, asparagine 60, and asparagine 134. Asparagine 192 is a glycosylation site (N-linked (GlcNAc...) asparagine; by host). The BetaCoV S1-CTD domain occupies 327-618 (PDCKIEEWLT…GINSGTTCST (292 aa)). The N-linked (GlcNAc...) asparagine; by host glycan is linked to asparagine 357. 2 cysteine pairs are disulfide-bonded: cysteine 372-cysteine 425 and cysteine 384-cysteine 616. Asparagine 435, asparagine 677, asparagine 709, asparagine 717, asparagine 789, and asparagine 806 each carry an N-linked (GlcNAc...) asparagine; by host glycan. Fusion peptide regions lie at residues 922-943 (SAIE…VEAY) and 941-961 (EAYN…VQSF). An N-linked (GlcNAc...) asparagine; by host glycan is attached at asparagine 945. The cysteines at positions 946 and 957 are disulfide-linked. The tract at residues 1022–1072 (QKMIASAFNNALGAIQEGFDATNSALGKIQSVVNANAEALNNLLNQLSNRF) is heptad repeat 1. The stretch at 1051-1095 (QSVVNANAEALNNLLNQLSNRFGAISASLQEILTRLDRVEAKAQI) forms a coiled coil. 5 N-linked (GlcNAc...) asparagine; by host glycosylation sites follow: asparagine 1232, asparagine 1242, asparagine 1261, asparagine 1277, and asparagine 1298. Positions 1266–1306 (APDLSLDFEKLNVTFLDLTYEMNRIQDAIKKLNESYINLKE) are heptad repeat 2. Residues 1279–1307 (TFLDLTYEMNRIQDAIKKLNESYINLKEV) adopt a coiled-coil conformation. A helical membrane pass occupies residues 1318 to 1338 (WYVWLLIGLAGVAVCVLLFFI). The Cytoplasmic segment spans residues 1339–1376 (CCCTGCGSCCFRKCGSCCDEYGGHQDSIVIYNISAHED). Residues 1372 to 1376 (SAHED) carry the KxHxx motif.

Belongs to the betacoronaviruses spike protein family. In terms of assembly, homotrimer; each monomer consists of a S1 and a S2 subunit. The resulting peplomers protrude from the virus surface as spikes. Specific enzymatic cleavages in vivo yield mature proteins. The precursor is processed into S1 and S2 by host cell furin or another cellular protease to yield the mature S1 and S2 proteins. Additionally, a second cleavage leads to the release of a fusion peptide after viral attachment to host cell receptor. Post-translationally, the cytoplasmic Cys-rich domain is palmitoylated. Spike glycoprotein is digested within host endosomes.

It localises to the virion membrane. The protein resides in the host endoplasmic reticulum-Golgi intermediate compartment membrane. It is found in the host cell membrane. Its function is as follows. Attaches the virion to the cell membrane by interacting with host receptor, initiating the infection. In terms of biological role, mediates fusion of the virion and cellular membranes by acting as a class I viral fusion protein. Under the current model, the protein has at least three conformational states: pre-fusion native state, pre-hairpin intermediate state, and post-fusion hairpin state. During viral and target cell membrane fusion, the coiled coil regions (heptad repeats) assume a trimer-of-hairpins structure, positioning the fusion peptide in close proximity to the C-terminal region of the ectodomain. The formation of this structure appears to drive apposition and subsequent fusion of viral and target cell membranes. Acts as a viral fusion peptide which is unmasked following S2 cleavage occurring upon virus endocytosis. This Mus musculus (Mouse) protein is Spike glycoprotein.